We begin with the raw amino-acid sequence, 1951 residues long: Sodium channel protein type 3 subunit alpha (1951 aa).

The Cytoplasmic segment spans residues 1-128 (MAQALLVPPG…KIAIKILVHS (128 aa)). A disordered region spans residues 28–60 (RAAEEKAKKPKKEQDIDDENKPKPNSDLEAGKN). Over residues 46–57 (ENKPKPNSDLEA) the composition is skewed to basic and acidic residues. Residues 110-455 (ILTPLNPVRK…QQMLEQLKKQ (346 aa)) form an I repeat. A helical transmembrane segment spans residues 129–146 (LFSMLIMCTILTNCVFMT). Topologically, residues 147–152 (LSNPPD) are extracellular. The helical transmembrane segment at 153-174 (WTKNVEYTFTGIYTFESLIKIL) threads the bilayer. Topologically, residues 175 to 188 (ARGFCLEDFTFLRD) are cytoplasmic. Residues 189–206 (PWNWLDFSVIVMAYVTEF) form a helical membrane-spanning segment. The Extracellular portion of the chain corresponds to 207-213 (VDLGNVS). Asn-211 carries N-linked (GlcNAc...) asparagine glycosylation. A helical membrane pass occupies residues 214–235 (ALRTFRVLRALKTISVIPGLKT). Residues 236–249 (IVGALIQSVKKLSD) lie on the Cytoplasmic side of the membrane. A helical membrane pass occupies residues 250–269 (VMILTVFCLSVFALIGLQLF). The Extracellular portion of the chain corresponds to 270–369 (MGNLRNKCSQ…NYGYTSFDTF (100 aa)). 5 N-linked (GlcNAc...) asparagine glycosylation sites follow: Asn-290, Asn-296, Asn-302, Asn-307, and Asn-339. Residues 370–386 (SWAFLSLFRLMTQDYWE) constitute an intramembrane region (pore-forming). Topologically, residues 387–397 (NLYQLTLRAAG) are extracellular. The helical transmembrane segment at 398 to 424 (KTYMIFFVLVIFLGSFYLVNLILAVVA) threads the bilayer. Residues 425–712 (MAYEEQNQAT…LVNLIVMDPF (288 aa)) are Cytoplasmic-facing. Phosphoserine occurs at positions 484, 485, and 486. Disordered regions lie at residues 493–529 (SKSA…SESE) and 587–633 (VGSE…TEVR). The segment covering 500-509 (RNRRKKRRQR) has biased composition (basic residues). 2 stretches are compositionally biased toward basic and acidic residues: residues 510 to 529 (EHLE…SESE) and 596 to 622 (DEHS…ERRN). Residues 693–965 (CCDAWLKVKH…QIAVGRMQKG (273 aa)) form an II repeat. The helical transmembrane segment at 713–730 (VDLAITICIVLNTLFMAM) threads the bilayer. Residues 731–738 (EHYPMTQQ) lie on the Extracellular side of the membrane. The chain crosses the membrane as a helical span at residues 739 to 763 (FSSVLTVGNLVFTGIFTAEMVLKII). Topologically, residues 764–773 (AMDPYYYFQE) are cytoplasmic. A helical membrane pass occupies residues 774 to 793 (GWNIFDGIIVSLSLMELGLA). Topologically, residues 794–797 (NVEG) are extracellular. A helical membrane pass occupies residues 798 to 816 (LSVLRSFRLLRVFKLAKSW). At 817–834 (PTLNMLIKIIGNSVGALG) the chain is on the cytoplasmic side. A helical transmembrane segment spans residues 835-855 (NLTLVLAIIVFIFAVVGMQLF). Residues 856 to 880 (GKSYKECVCKINVDCKLPRWHMNDF) lie on the Extracellular side of the membrane. Residues Cys-864 and Cys-870 are joined by a disulfide bond. The pore-forming intramembrane region spans 881 to 896 (FHSFLIVFRVLCGEWI). The Extracellular segment spans residues 897–907 (ETMWDCMEVAG). Cys-902 and Cys-911 are oxidised to a cystine. A helical transmembrane segment spans residues 908–934 (QTMCLIVFMLVMVIGNLVVLNLFLALL). Topologically, residues 935-1156 (LSSFSSDNLA…RKTCYSIVEH (222 aa)) are cytoplasmic. Positions 1068 to 1112 (TEEFSSESELEESKEKLNATSSSEGSTVDVAPPREGEQAEIEPEE) are disordered. The III repeat unit spans residues 1139 to 1450 (KGKIWWNLRK…KKYYNAMKKL (312 aa)). A helical membrane pass occupies residues 1157–1177 (NWFETFIVFMILLSSGALAFE). The Extracellular portion of the chain corresponds to 1178–1189 (DIYIEQRKTIKT). Residues 1190-1211 (MLEYADKVFTYIFILEMLLKWV) form a helical membrane-spanning segment. Over 1212–1217 (AYGFQT) the chain is Cytoplasmic. Residues 1218-1243 (YFTNAWCWLDFLIVDVSLVSLVANAL) form a helical membrane-spanning segment. The Extracellular portion of the chain corresponds to 1244-1252 (GYSELGAIK). A helical transmembrane segment spans residues 1253-1271 (SLRTLRALRPLRALSRFEG). The Cytoplasmic portion of the chain corresponds to 1272–1284 (MRVVVNALVGAIP). The chain crosses the membrane as a helical span at residues 1285–1307 (SIMNVLLVCLIFWLIFSIMGVNL). Over 1308 to 1353 (FAGKFYHCVNTTTGNMFEIKEVNNFSDCQALGKQARWKNVKVNFDN) the chain is Extracellular. A disulfide bridge links Cys-1315 with Cys-1335. 2 N-linked (GlcNAc...) asparagine glycosylation sites follow: Asn-1317 and Asn-1331. Positions 1354–1370 (VGAGYLALLQVATFKGW) form an intramembrane region, pore-forming. At 1371 to 1393 (MDIMYAAVDSRDVKLQPIYEENL) the chain is on the extracellular side. The helical transmembrane segment at 1394 to 1419 (YMYLYFVIFIIFGSFFTLNLFIGVII) threads the bilayer. At 1420–1477 (DNFNQQKKKFGGQDIFMTEEQKKYYNAMKKLGSKKPQKPIPRPANKFQGMVFDFVTRQ) the chain is on the cytoplasmic side. Ser-1452 is subject to Phosphoserine; by PKC. The stretch at 1459–1757 (IPRPANKFQG…WEKFDPDATQ (299 aa)) is one IV repeat. Residues 1478-1496 (VFDISIMILICLNMVTMMV) form a helical membrane-spanning segment. Topologically, residues 1497–1504 (ETDDQSKY) are extracellular. The helical transmembrane segment at 1505–1528 (MTLVLSRINLVFIVLFTGEFLLKL) threads the bilayer. Topologically, residues 1529–1538 (ISLRYYYFTI) are cytoplasmic. Residues 1539 to 1556 (GWNIFDFVVVILSIVGMF) traverse the membrane as a helical segment. At 1557–1568 (LAELIEKYFVSP) the chain is on the extracellular side. The chain crosses the membrane as a helical span at residues 1569–1591 (TLFRVIRLARIGRILRLIKGAKG). The Cytoplasmic portion of the chain corresponds to 1592–1604 (IRTLLFALMMSLP). Residues 1605–1628 (ALFNIGLLLFLVMFIYAIFGMSNF) form a helical membrane-spanning segment. The Extracellular segment spans residues 1629–1650 (AYVKKEAGIDDMFNFETFGNSM). Positions 1651–1663 (ICLFQITTSAGWD) form an intramembrane region, pore-forming. The Extracellular portion of the chain corresponds to 1664 to 1695 (GLLAPILNSAPPDCDPDAIHPGSSVKGDCGNP). Residues 1696-1721 (SVGIFFFVSYIIISFLVVVNMYIAVI) traverse the membrane as a helical segment. The Cytoplasmic segment spans residues 1722–1951 (LENFSVATEE…KGKEVRENQK (230 aa)). Residues 1851–1880 (EEVSAAIIQRNYRCYLLKQRLKNISSKYDK) form the IQ domain. The disordered stretch occupies residues 1898–1951 (DKLNGNSTPEKTDGSSSTTSPPSYDSVTKPDKEKFEKDKPEKEIKGKEVRENQK). Positions 1925–1951 (TKPDKEKFEKDKPEKEIKGKEVRENQK) are enriched in basic and acidic residues.

Belongs to the sodium channel (TC 1.A.1.10) family. Nav1.3/SCN3A subfamily. As to quaternary structure, heterooligomer of an alpha subunit, SCN3A, and 1 to 3 regulatory beta subunits including SCN1B and SCN2B; disulfide-linked with some beta subunits like SCN2B. Interacts with NEDD4L; could regulate expression of SCN3A at the plasma membrane through ubiquitination-regulated endocytosis. Interacts with the conotoxin GVIIJ. Interacts with the spider beta/delta-theraphotoxin-Pre1a. Interacts with the spider RTX-VII toxin (AC P0DL75). In terms of processing, may be ubiquitinated by NEDD4L; which would promote its endocytosis. Post-translationally, phosphorylation at Ser-1452 by PKC in a highly conserved cytoplasmic loop slows inactivation of the sodium channel and reduces peak sodium currents.

The protein resides in the cell membrane. The protein localises to the basal cell membrane. The catalysed reaction is Na(+)(in) = Na(+)(out). Its function is as follows. Pore-forming subunit of Nav1.3, a voltage-gated sodium (Nav) channel that directly mediates the depolarizing phase of action potentials in excitable membranes. Navs, also called VGSCs (voltage-gated sodium channels) or VDSCs (voltage-dependent sodium channels), operate by switching between closed and open conformations depending on the voltage difference across the membrane. In the open conformation they allow Na(+) ions to selectively pass through the pore, along their electrochemical gradient. The influx of Na+ ions provokes membrane depolarization, initiating the propagation of electrical signals throughout cells and tissues. In some secretory cell types, it also participates in cell excitability through membrane depolarization and regulates cells responsiveness to stimuli triggering secretion. For instance, it controls the release of serotonin/5-hydroxytryptamine by enterochromaffin cells and is required for both glucagon- and glucose-induced insulin secretion in pancreatic endocrine cells. The protein is Sodium channel protein type 3 subunit alpha of Rattus norvegicus (Rat).